We begin with the raw amino-acid sequence, 204 residues long: MERVWNPAAGIDGLKRSETYLVDPHDFVGVLTLSPYTVFERGLFVRMSGMRLLALLAAPKPQEPQPAVRRFPQRSRRNVCLKACADGAQSLAKVLAARVSMPPCMSKTMADLSSAPRGNMYRKRFEFNCYLANVITCTKCKTACLIGALLHFYRMDAKCVGEVTHLLIKAQDVYKPSNCAKMKKVTKLCPQASMCKGLNPICNF.

It belongs to the baculoviridae LEF-2 family.

Its function is as follows. Required for late and very late gene expression. Specifically required for expression from the vp39 and polh promoters. The chain is Late expression factor 2 (LEF-2) from Orgyia pseudotsugata (Douglas-fir tussock moth).